A 120-amino-acid chain; its full sequence is GATA transcription factor 23 (120 aa).

A GATA-type zinc finger spans residues 22–76 (KGTIRCCSECKTTKTPMWRGGPTGPKSLCNACGIRHRKQRRSELLGIHIIRSHKS).

This sequence belongs to the type IV zinc-finger family. Class B subfamily.

The protein localises to the nucleus. Transcriptional regulator that specifically binds 5'-GATA-3' or 5'-GAT-3' motifs within gene promoters. The protein is GATA transcription factor 23 (GATA23) of Arabidopsis thaliana (Mouse-ear cress).